A 317-amino-acid polypeptide reads, in one-letter code: Olfactory receptor 5K17 (317 aa).

The Extracellular segment spans residues 1 to 28 (MMKANHSLTVEFILIGFSDHTDLKTLLF). The N-linked (GlcNAc...) asparagine glycan is linked to asparagine 5. The chain crosses the membrane as a helical span at residues 29-49 (LLFSAIYLVTIVGNLGLVALI). Residues 50 to 56 (YMEPRLH) are Cytoplasmic-facing. The helical transmembrane segment at 57 to 77 (TPMYIFLGNLALMDSCCSCAI) threads the bilayer. Over 78–93 (TPKMLENFFSVDRRIS) the chain is Extracellular. The helical transmembrane segment at 94 to 114 (LYECMVQFYFLCLAETADCFL) threads the bilayer. Cysteine 97 and cysteine 189 are disulfide-bonded. Residues 115 to 144 (LAAMAYDRYVAICNPLQYHTMMSKKLSIQM) are Cytoplasmic-facing. A helical transmembrane segment spans residues 145-165 (SIGTFIASNLHSLIHTGCLLR). Topologically, residues 166-198 (LNFCKSRRIDHFFCDILPLYKLSCTDPFINELM) are extracellular. Residues 199–219 (LYIFSMPIQVFTITTVLVSYS) traverse the membrane as a helical segment. At 220-239 (CILLTVFKMKSKDGRGKAFS) the chain is on the cytoplasmic side. Residues 240–259 (TCASHFFSVSIFYICLLMYI) form a helical membrane-spanning segment. Topologically, residues 260 to 268 (GPSKNSNKD) are extracellular. Residues 269-289 (IPVGVFYTIVIPLLNPFIYSL) form a helical membrane-spanning segment. The Cytoplasmic portion of the chain corresponds to 290-317 (RNKEVVNAVKKVMKTHSIFKNSSASIAH).

It belongs to the G-protein coupled receptor 1 family.

Its subcellular location is the cell membrane. In terms of biological role, potential odorant receptor. The protein is Olfactory receptor 5K17 of Mus musculus (Mouse).